We begin with the raw amino-acid sequence, 177 residues long: Large ribosomal subunit protein uL6 (177 aa).

It belongs to the universal ribosomal protein uL6 family. As to quaternary structure, part of the 50S ribosomal subunit.

Its function is as follows. This protein binds to the 23S rRNA, and is important in its secondary structure. It is located near the subunit interface in the base of the L7/L12 stalk, and near the tRNA binding site of the peptidyltransferase center. The polypeptide is Large ribosomal subunit protein uL6 (Pseudomonas syringae pv. tomato (strain ATCC BAA-871 / DC3000)).